Here is a 155-residue protein sequence, read N- to C-terminus: Transcriptional repressor NrdR (155 aa).

A zinc finger spans residues Cys3–Cys34. One can recognise an ATP-cone domain in the interval Leu49–Asp139.

It belongs to the NrdR family. Zn(2+) is required as a cofactor.

Negatively regulates transcription of bacterial ribonucleotide reductase nrd genes and operons by binding to NrdR-boxes. The polypeptide is Transcriptional repressor NrdR (Cereibacter sphaeroides (strain ATCC 17025 / ATH 2.4.3) (Rhodobacter sphaeroides)).